The chain runs to 111 residues: Nucleoid-associated protein Clim_0875 (111 aa).

Belongs to the YbaB/EbfC family. Homodimer.

It localises to the cytoplasm. The protein localises to the nucleoid. In terms of biological role, binds to DNA and alters its conformation. May be involved in regulation of gene expression, nucleoid organization and DNA protection. The chain is Nucleoid-associated protein Clim_0875 from Chlorobium limicola (strain DSM 245 / NBRC 103803 / 6330).